The primary structure comprises 34 residues: Trypsin inhibitor (34 aa).

2 cysteine pairs are disulfide-bonded: Cys7–Cys29 and Cys11–Cys25.

The protein resides in the secreted. In terms of biological role, inhibits trypsin. This Veronica hederifolia (Ivy-leaved speedwell) protein is Trypsin inhibitor.